Reading from the N-terminus, the 362-residue chain is Histidinol-phosphate aminotransferase (362 aa).

Position 218 is an N6-(pyridoxal phosphate)lysine (lysine 218).

Belongs to the class-II pyridoxal-phosphate-dependent aminotransferase family. Histidinol-phosphate aminotransferase subfamily. As to quaternary structure, homodimer. Pyridoxal 5'-phosphate is required as a cofactor.

It carries out the reaction L-histidinol phosphate + 2-oxoglutarate = 3-(imidazol-4-yl)-2-oxopropyl phosphate + L-glutamate. It functions in the pathway amino-acid biosynthesis; L-histidine biosynthesis; L-histidine from 5-phospho-alpha-D-ribose 1-diphosphate: step 7/9. This is Histidinol-phosphate aminotransferase from Ruegeria sp. (strain TM1040) (Silicibacter sp.).